The chain runs to 417 residues: Calreticulin (417 aa).

Residues 1-17 (MLLSVPLLLGLLGLAVA) form the signal peptide. Residues 18–197 (EPAVYFKEQF…NSQVESGSLE (180 aa)) are N-domain. Glutamine 26 serves as a coordination point for Ca(2+). N6-acetyllysine is present on lysine 48. Positions 62 and 64 each coordinate Ca(2+). Lysine 64 carries the N6-(2-hydroxyisobutyryl)lysine modification. Cysteine 105 and cysteine 137 form a disulfide bridge. Residues tyrosine 109, lysine 111, tyrosine 128, and aspartate 135 each coordinate an alpha-D-glucoside. Position 159 is an N6-acetyllysine (lysine 159). The 1-1 repeat unit spans residues 191-202 (VESGSLEDDWDF). Positions 191-255 (VESGSLEDDW…DAKKPEDWDE (65 aa)) are 4 X approximate repeats. A disordered region spans residues 193-278 (SGSLEDDWDF…PEYKGEWKPR (86 aa)). Positions 198–308 (DDWDFLPPKK…YSPDPSIYAY (111 aa)) are P-domain. Residues 207 to 251 (KIKDPDASKPEDWDERAKIDDPTDSKPEDWDKPEHIPDPDAKKPE) are compositionally biased toward basic and acidic residues. An N6-acetyllysine modification is found at lysine 209. 6 consecutive repeat copies span residues 210 to 221 (DPDASKPEDWDE), 227 to 238 (DPTDSKPEDWDK), 244 to 255 (DPDAKKPEDWDE), 259 to 269 (GEWEPPVIQNP), 273 to 283 (GEWKPRQIDNP), and 287 to 297 (GTWIHPEIDNP). An interaction with PPIB region spans residues 237–270 (DKPEHIPDPDAKKPEDWDEEMDGEWEPPVIQNPE). The span at 252–261 (DWDEEMDGEW) shows a compositional bias: acidic residues. The 3 X approximate repeats stretch occupies residues 259 to 297 (GEWEPPVIQNPEYKGEWKPRQIDNPDYKGTWIHPEIDNP). The segment at 309–417 (DNFGVLGLDL…DVPGQAKDEL (109 aa)) is C-domain. An alpha-D-glucoside is bound at residue aspartate 317. Aspartate 328 is a Ca(2+) binding site. N-linked (GlcNAc...) asparagine glycosylation occurs at asparagine 344. The segment at 350 to 417 (TKAAEKQMKD…DVPGQAKDEL (68 aa)) is disordered. Basic and acidic residues predominate over residues 352–379 (AAEKQMKDKQDEEQRLKEEEEDKKRKEE). Residues 380–409 (EEAEDKEDDEDKDEDEEDEEDKEEDEEEDV) show a composition bias toward acidic residues. Positions 414-417 (KDEL) match the Prevents secretion from ER motif.

It belongs to the calreticulin family. In terms of assembly, monomer. Component of an EIF2 complex at least composed of CELF1/CUGBP1, CALR, CALR3, EIF2S1, EIF2S2, HSP90B1 and HSPA5. Interacts with PDIA3/ERp57 and SPACA9. Interacts with TRIM21. Interacts with NR3C1. Interacts with PPIB. Interacts (via P-domain) with PDIA5. Interacts with GABARAP. Interacts with HLA-E-B2M and HLA-G-B2M complexes. Interacts with HLA-F. Interacts with CLCC1.

The protein resides in the endoplasmic reticulum lumen. It is found in the cytoplasm. Its subcellular location is the cytosol. It localises to the secreted. The protein localises to the extracellular space. The protein resides in the extracellular matrix. It is found in the cell surface. Its subcellular location is the sarcoplasmic reticulum lumen. It localises to the cytoplasmic vesicle. The protein localises to the secretory vesicle. The protein resides in the cortical granule. It is found in the cytolytic granule. Calcium-binding chaperone that promotes folding, oligomeric assembly and quality control in the endoplasmic reticulum (ER) via the calreticulin/calnexin cycle. This lectin interacts transiently with almost all of the monoglucosylated glycoproteins that are synthesized in the ER. Interacts with the DNA-binding domain of NR3C1 and mediates its nuclear export. Involved in maternal gene expression regulation. May participate in oocyte maturation via the regulation of calcium homeostasis. Present in the cortical granules of non-activated oocytes, is exocytosed during the cortical reaction in response to oocyte activation and might participate in the block to polyspermy. In Homo sapiens (Human), this protein is Calreticulin.